The following is a 438-amino-acid chain: MRLTKAFQPTLKEVPAEAQIASHRLMLRAGLVRQTASGIYAWLPAGLRVLRNIEQIIREEQDAIGAQEVLMPTLQSAELWRRSGRYDAYGPEMLRIQDRHGRDLLYGPTNEEMITDIFGSSVKSYKELPKALYHIQWKFRDEVRPRFGVMRGREFLMKDAYSFDASYEGAVASYRRMMLSYLRIFQRLGVRAVPMVADTGPIGGDLSHEFLVLAPTGESAVFFDAALEEQDWLSRPVDCDDAESLATFFATVTDHYAATDEKHDEAEWAKVPAERKREGRGIEVGHIFYFGTKYTASMGIEVSGPDGAPFHPHMGSYGVGVSRLVGAIIEASHDDAGIIWPASVAPYRAAILNLRQDDEACDAICDRIYGTDPENLLYDDRSERAGVKFNDADLMGHPWQIIVGPRGAKEGKVELKQRATGERFELSVEDALAKIGAA.

The protein belongs to the class-II aminoacyl-tRNA synthetase family. ProS type 2 subfamily. Homodimer.

It localises to the cytoplasm. It carries out the reaction tRNA(Pro) + L-proline + ATP = L-prolyl-tRNA(Pro) + AMP + diphosphate. Catalyzes the attachment of proline to tRNA(Pro) in a two-step reaction: proline is first activated by ATP to form Pro-AMP and then transferred to the acceptor end of tRNA(Pro). The polypeptide is Proline--tRNA ligase (Gluconobacter oxydans (strain 621H) (Gluconobacter suboxydans)).